The sequence spans 188 residues: Elongation factor P (188 aa).

Residue K34 is modified to N6-(3,6-diaminohexanoyl)-5-hydroxylysine.

The protein belongs to the elongation factor P family. May be beta-lysylated on the epsilon-amino group of Lys-34 by the combined action of EpmA and EpmB, and then hydroxylated on the C5 position of the same residue by EpmC (if this protein is present). Lysylation is critical for the stimulatory effect of EF-P on peptide-bond formation. The lysylation moiety may extend toward the peptidyltransferase center and stabilize the terminal 3-CCA end of the tRNA. Hydroxylation of the C5 position on Lys-34 may allow additional potential stabilizing hydrogen-bond interactions with the P-tRNA.

The protein resides in the cytoplasm. Its pathway is protein biosynthesis; polypeptide chain elongation. Its function is as follows. Involved in peptide bond synthesis. Alleviates ribosome stalling that occurs when 3 or more consecutive Pro residues or the sequence PPG is present in a protein, possibly by augmenting the peptidyl transferase activity of the ribosome. Modification of Lys-34 is required for alleviation. The chain is Elongation factor P from Coxiella burnetii (strain CbuK_Q154) (Coxiella burnetii (strain Q154)).